Here is a 407-residue protein sequence, read N- to C-terminus: Argininosuccinate synthase (407 aa).

ATP is bound by residues 13–21 (AYSGGLDTS) and Ala40. Residues Tyr91 and Ser96 each contribute to the L-citrulline site. Gly121 provides a ligand contact to ATP. Positions 123, 127, and 128 each coordinate L-aspartate. Residue Asn127 coordinates L-citrulline. L-citrulline-binding residues include Arg131, Ser182, Ser191, Glu267, and Tyr279.

Belongs to the argininosuccinate synthase family. Type 1 subfamily. In terms of assembly, homotetramer.

It localises to the cytoplasm. It catalyses the reaction L-citrulline + L-aspartate + ATP = 2-(N(omega)-L-arginino)succinate + AMP + diphosphate + H(+). It participates in amino-acid biosynthesis; L-arginine biosynthesis; L-arginine from L-ornithine and carbamoyl phosphate: step 2/3. This chain is Argininosuccinate synthase, found in Agrobacterium fabrum (strain C58 / ATCC 33970) (Agrobacterium tumefaciens (strain C58)).